The chain runs to 1010 residues: Polyhomeotic-like protein 1 (1010 aa).

The segment covering M1–S22 has biased composition (low complexity). 6 disordered regions span residues M1–Q25, N212–T243, G259–V312, Q444–P506, G565–L588, and K646–V678. Residues N212–K228 show a composition bias toward polar residues. Residues M279–G292 are compositionally biased toward gly residues. Pro residues predominate over residues P453 to Q463. Low complexity predominate over residues V464–P480. The span at T488 to P500 shows a compositional bias: pro residues. Positions A575 to A587 are enriched in low complexity. S651 carries the phosphoserine modification. Residue K769 forms a Glycyl lysine isopeptide (Lys-Gly) (interchain with G-Cter in SUMO2) linkage. Residues Q772 to S794 form a disordered region. Residues L797–K831 form an FCS-type zinc finger. Positions 806, 809, 825, and 829 each coordinate Zn(2+). The tract at residues A854–T928 is disordered. At S904 the chain carries Phosphoserine. T928 is subject to Phosphothreonine. In terms of domain architecture, SAM spans W946 to T1010.

Homodimer. Component of a PRC1-like complex. Interacts with the SAM domain of SCMH1 via its SAM domain in vitro. Interacts with RNF2 and CBX7. Interacts with PHC2. Interacts with BMI1. In terms of tissue distribution, highly expressed in testis with lower levels in most other tissues. Expressed in embryonic stem cells.

The protein localises to the nucleus. Its function is as follows. Component of a Polycomb group (PcG) multiprotein PRC1-like complex, a complex class required to maintain the transcriptionally repressive state of many genes, including Hox genes, throughout development. PcG PRC1 complex acts via chromatin remodeling and modification of histones; it mediates monoubiquitination of histone H2A 'Lys-119', rendering chromatin heritably changed in its expressibility. Required for proper control of cellular levels of GMNN expression. This Mus musculus (Mouse) protein is Polyhomeotic-like protein 1.